A 317-amino-acid polypeptide reads, in one-letter code: Large ribosomal subunit protein uL10 (317 aa).

Belongs to the universal ribosomal protein uL10 family. P0 forms a pentameric complex by interaction with dimers of P1 and P2. In terms of processing, phosphorylated.

Ribosomal protein P0 is the functional equivalent of E.coli protein L10. The polypeptide is Large ribosomal subunit protein uL10 (rplp0) (Ictalurus punctatus (Channel catfish)).